Here is a 332-residue protein sequence, read N- to C-terminus: L-lactate dehydrogenase A chain (332 aa).

NAD(+)-binding positions include Gly29 to Lys57 and Arg99. Arg106, Asn138, and Arg169 together coordinate substrate. Asn138 lines the NAD(+) pocket. Residue His193 is the Proton acceptor of the active site. Substrate is bound at residue Thr248.

This sequence belongs to the LDH/MDH superfamily. LDH family. In terms of assembly, homotetramer.

The protein localises to the cytoplasm. It catalyses the reaction (S)-lactate + NAD(+) = pyruvate + NADH + H(+). Its pathway is fermentation; pyruvate fermentation to lactate; (S)-lactate from pyruvate: step 1/1. Functionally, interconverts simultaneously and stereospecifically pyruvate and lactate with concomitant interconversion of NADH and NAD(+). The sequence is that of L-lactate dehydrogenase A chain (LDHA) from Caiman crocodilus apaporiensis (Rio Apaporis caiman).